Reading from the N-terminus, the 195-residue chain is Orotate phosphoribosyltransferase (195 aa).

5-phospho-alpha-D-ribose 1-diphosphate is bound at residue 117-125 (EDITTTGGS). 2 residues coordinate orotate: threonine 121 and arginine 149.

The protein belongs to the purine/pyrimidine phosphoribosyltransferase family. PyrE subfamily. Homodimer. It depends on Mg(2+) as a cofactor.

The catalysed reaction is orotidine 5'-phosphate + diphosphate = orotate + 5-phospho-alpha-D-ribose 1-diphosphate. It functions in the pathway pyrimidine metabolism; UMP biosynthesis via de novo pathway; UMP from orotate: step 1/2. Its function is as follows. Catalyzes the transfer of a ribosyl phosphate group from 5-phosphoribose 1-diphosphate to orotate, leading to the formation of orotidine monophosphate (OMP). This chain is Orotate phosphoribosyltransferase, found in Acidithiobacillus ferrooxidans (strain ATCC 53993 / BNL-5-31) (Leptospirillum ferrooxidans (ATCC 53993)).